A 103-amino-acid chain; its full sequence is Cytochrome c55X (103 aa).

Residues 1–17 (MARLALLLVLLAGTAVA) form the signal peptide. Heme c contacts are provided by Cys36, Cys39, and His40.

Post-translationally, binds 1 heme c group covalently per subunit.

It is found in the periplasm. Functionally, monoheme c-type cytochrome. In Paracoccus denitrificans (strain Pd 1222), this protein is Cytochrome c55X (nirC).